Here is a 346-residue protein sequence, read N- to C-terminus: Probable aldo-keto reductase 2 (346 aa).

Tyr-63 functions as the Proton donor in the catalytic mechanism. His-131 is a binding site for substrate. 210-220 (SPLGRGFLAAG) is an NADP(+) binding site.

It belongs to the aldo/keto reductase family. Aldo/keto reductase 13 subfamily.

The protein is Probable aldo-keto reductase 2 (AGD2) of Arabidopsis thaliana (Mouse-ear cress).